A 380-amino-acid polypeptide reads, in one-letter code: Succinyl-diaminopimelate desuccinylase (380 aa).

Residue histidine 68 coordinates Zn(2+). Aspartate 70 is a catalytic residue. Residue aspartate 101 participates in Zn(2+) binding. The Proton acceptor role is filled by glutamate 135. Residues glutamate 136, glutamate 164, and histidine 350 each coordinate Zn(2+).

Belongs to the peptidase M20A family. DapE subfamily. As to quaternary structure, homodimer. Requires Zn(2+) as cofactor. It depends on Co(2+) as a cofactor.

The catalysed reaction is N-succinyl-(2S,6S)-2,6-diaminopimelate + H2O = (2S,6S)-2,6-diaminopimelate + succinate. Its pathway is amino-acid biosynthesis; L-lysine biosynthesis via DAP pathway; LL-2,6-diaminopimelate from (S)-tetrahydrodipicolinate (succinylase route): step 3/3. Functionally, catalyzes the hydrolysis of N-succinyl-L,L-diaminopimelic acid (SDAP), forming succinate and LL-2,6-diaminopimelate (DAP), an intermediate involved in the bacterial biosynthesis of lysine and meso-diaminopimelic acid, an essential component of bacterial cell walls. This chain is Succinyl-diaminopimelate desuccinylase, found in Tolumonas auensis (strain DSM 9187 / NBRC 110442 / TA 4).